We begin with the raw amino-acid sequence, 401 residues long: Formate-dependent phosphoribosylglycinamide formyltransferase (401 aa).

N(1)-(5-phospho-beta-D-ribosyl)glycinamide is bound by residues 22–23 (EL) and Glu-82. Residues Arg-115, Lys-157, 162–167 (SSGKGQ), 197–200 (EGFV), and Glu-205 each bind ATP. Residues 120-315 (RLAAETLALP…EFELHARAIL (196 aa)) form the ATP-grasp domain. Mg(2+) is bound by residues Glu-274 and Glu-286. N(1)-(5-phospho-beta-D-ribosyl)glycinamide is bound by residues Asp-293, Lys-362, and 369–370 (RR).

Belongs to the PurK/PurT family. As to quaternary structure, homodimer.

The enzyme catalyses N(1)-(5-phospho-beta-D-ribosyl)glycinamide + formate + ATP = N(2)-formyl-N(1)-(5-phospho-beta-D-ribosyl)glycinamide + ADP + phosphate + H(+). The protein operates within purine metabolism; IMP biosynthesis via de novo pathway; N(2)-formyl-N(1)-(5-phospho-D-ribosyl)glycinamide from N(1)-(5-phospho-D-ribosyl)glycinamide (formate route): step 1/1. Involved in the de novo purine biosynthesis. Catalyzes the transfer of formate to 5-phospho-ribosyl-glycinamide (GAR), producing 5-phospho-ribosyl-N-formylglycinamide (FGAR). Formate is provided by PurU via hydrolysis of 10-formyl-tetrahydrofolate. This is Formate-dependent phosphoribosylglycinamide formyltransferase from Polaromonas naphthalenivorans (strain CJ2).